Here is a 56-residue protein sequence, read N- to C-terminus: MPLTDPAKLQIVQQRVFLKKVCRKCGALNPIRATKCRRCHSTNLRLKKKELPTKKG.

This sequence belongs to the eukaryotic ribosomal protein eL40 family.

The sequence is that of Large ribosomal subunit protein eL40 from Saccharolobus islandicus (strain Y.N.15.51 / Yellowstone #2) (Sulfolobus islandicus).